The following is a 349-amino-acid chain: Transcription factor HBP-1a (349 aa).

A compositionally biased stretch (polar residues) spans 1–11 (MGSNDPSTPSK). Disordered regions lie at residues 1 to 39 (MGSN…WPGF), 101 to 196 (FHYP…NKPM), 224 to 277 (GATG…QAEC), and 312 to 349 (NTSL…QKEP). Positions 113-124 (PAGAQGAAPGAA) are enriched in low complexity. The segment covering 174 to 191 (NENGSAQNGVSHSSSHGT) has biased composition (polar residues). Residues 252-315 (ELKKQKRKLS…EELLSKNTSL (64 aa)) form the bZIP domain. Residues 254–273 (KKQKRKLSNRESARRSRLRK) form a basic motif region. Basic and acidic residues predominate over residues 261 to 277 (SNRESARRSRLRKQAEC). The interval 280-315 (LGQRAEALKSENSSLRIELDRIKKEYEELLSKNTSL) is leucine-zipper. Basic and acidic residues predominate over residues 334–349 (MNERGDTNGGSHQKEP).

Belongs to the bZIP family. Binds DNA as a dimer.

It localises to the nucleus. Binds to the hexamer motif 5'-ACGTCA-3' of histone gene promoters. This is Transcription factor HBP-1a from Triticum aestivum (Wheat).